A 427-amino-acid chain; its full sequence is Lactadherin (427 aa).

Positions 1–18 are cleaved as a signal peptide; that stretch reads MPCPRLLAALFCSSGLFA. EGF-like domains lie at 20–59 and 62–106; these read SGDF…LLCN and EHGP…IHCE. Intrachain disulfides connect C24–C35, C29–C47, and C49–C58. Residue S27 is glycosylated (O-linked (Fuc...) serine; in PAS-6). A glycan (O-linked (Fuc...) threonine; in PAS-7) is linked at T34. N59 carries N-linked (GlcNAc...) (hybrid) asparagine; in PAS-6 and PAS-7 glycosylation. 6 disulfide bridges follow: C66–C77, C71–C94, C96–C105, C109–C265, C252–C256, and C270–C427. Positions 85–87 match the Cell attachment site motif; sequence RGD. F5/8 type C domains lie at 109–265 and 270–427; these read CTSP…LLGC and CTEP…LLGC. N227 is a glycosylation site (N-linked (GlcNAc...) (high mannose) asparagine; in PAS-6).

In terms of processing, the two O-linked glycans consist of Gal, GlcNAc and Fuc, with probably Fuc as reducing terminal sugar. Milk and spermatozoan. Also present in epididymis, kidney, heart, lymphatic gland and spleen but not esophagus, small intestine, muscle and liver.

It localises to the membrane. The protein localises to the secreted. It is found in the cytoplasmic vesicle. Its subcellular location is the secretory vesicle. The protein resides in the acrosome membrane. Contributes to phagocytic removal of apoptotic cells in many tissues. Plays an important role in the maintenance of intestinal epithelial homeostasis and the promotion of mucosal healing. Promotes VEGF-dependent neovascularization. Specific ligand for the alpha-v/beta-3 and alpha-v/beta-5 receptors. Also binds to phosphatidylserine-enriched cell surfaces in a receptor-independent manner. Zona pellucida-binding protein which may play a role in gamete interaction. This is Lactadherin (MFGE8) from Bos taurus (Bovine).